Here is a 461-residue protein sequence, read N- to C-terminus: Putative 2,3-dihydroxypropane-1-sulfonate exporter (461 aa).

Residues 1–20 lie on the Cytoplasmic side of the membrane; sequence MSHITTEDPATLRLPFKEKL. The chain crosses the membrane as a helical span at residues 21–41; sequence SYGIGDLASNILLDIGTLYLL. The Periplasmic portion of the chain corresponds to 42-47; sequence KFYTDV. A helical transmembrane segment spans residues 48 to 68; the sequence is LGLPGTYGGIIFLISKFFTAF. The Cytoplasmic segment spans residues 69-92; sequence TDMGTGIMLDSRRKIGPKGKFRPF. Residues 93–113 form a helical membrane-spanning segment; that stretch reads ILYASFPVTLLAIANFVGTPF. Residues 114–123 are Periplasmic-facing; sequence DVTGKTVMAT. Residues 124–144 traverse the membrane as a helical segment; sequence ILFMLYGLFFSMMNCSYGAMV. Residues 145 to 162 lie on the Cytoplasmic side of the membrane; sequence PAITKNPNERASLAAWRQ. The helical transmembrane segment at 163-183 threads the bilayer; it reads GGATLGLLLCTVGFVPVMNLI. The Periplasmic portion of the chain corresponds to 184-188; the sequence is EGNQQ. A helical membrane pass occupies residues 189–209; it reads LGYIFAATLFSLFGLLFMWIC. Topologically, residues 210-243 are cytoplasmic; it reads YSGVKERYVETQPANPAQKPGLLQSFRAIAGNRP. The helical transmembrane segment at 244-264 threads the bilayer; that stretch reads LFILCIANLCTLGAFNVKLAI. Topologically, residues 265–276 are periplasmic; sequence QVYYTQYVLNDP. Residues 277–297 form a helical membrane-spanning segment; that stretch reads ILLSYMGFFSMGCIFIGVFLM. The Cytoplasmic segment spans residues 298-308; sequence PASVRRFGKKK. Residues 309–329 traverse the membrane as a helical segment; it reads VYIGGLLIWVLGDLLNYFFGG. Gly330 is a topological domain (periplasmic). Residues 331–351 form a helical membrane-spanning segment; it reads SVSFVAFSCLAFFGSAFVNSL. At 352–387 the chain is on the cytoplasmic side; it reads NWALVSDTVEYGEWRTGVRSEGTVYTGFTFFRKVSQ. A helical membrane pass occupies residues 388–408; that stretch reads ALAGFFPGWMLTQIGYVPNVA. Over 409 to 419 the chain is Periplasmic; that stretch reads QADHTIEGLRQ. A helical membrane pass occupies residues 420 to 440; that stretch reads LIFIYPSALAVVTIVAMGCFY. The Cytoplasmic portion of the chain corresponds to 441-461; sequence SLNEKMYVRIVEEIEARKRTA.

It belongs to the sodium:galactoside symporter (TC 2.A.2) family.

It localises to the cell inner membrane. Its function is as follows. Could be involved in the export of 2,3-dihydroxypropane-1-sulfonate (DHPS). This Escherichia coli (strain K12) protein is Putative 2,3-dihydroxypropane-1-sulfonate exporter (yihP).